A 155-amino-acid chain; its full sequence is Anaerobic ribonucleoside-triphosphate reductase-activating protein (155 aa).

The [4Fe-4S] cluster site is built by cysteine 26, cysteine 30, and cysteine 33. S-adenosyl-L-methionine contacts are provided by residues 32–34 (GCY) and glycine 74.

It belongs to the organic radical-activating enzymes family. In terms of assembly, forms a tetramer composed of two NrdD and two NrdG subunits. [4Fe-4S] cluster serves as cofactor.

The protein localises to the cytoplasm. It catalyses the reaction glycyl-[protein] + reduced [flavodoxin] + S-adenosyl-L-methionine = glycin-2-yl radical-[protein] + semiquinone [flavodoxin] + 5'-deoxyadenosine + L-methionine + H(+). Functionally, activation of anaerobic ribonucleoside-triphosphate reductase under anaerobic conditions by generation of an organic free radical, using S-adenosylmethionine and reduced flavodoxin as cosubstrates to produce 5'-deoxy-adenosine. The sequence is that of Anaerobic ribonucleoside-triphosphate reductase-activating protein (nrdG) from Vibrio cholerae serotype O1 (strain ATCC 39315 / El Tor Inaba N16961).